Here is a 186-residue protein sequence, read N- to C-terminus: TATA box-binding protein-like 1 (186 aa).

The protein belongs to the TBP family. As to expression, expressed ubiquitously with highest expression in the ovary and testis.

It localises to the cytoplasm. It is found in the nucleus. Functionally, part of a specialized transcription system that mediates the transcription of most ribosomal proteins through the 5'-TCT-3' motif which is a core promoter element at these genes. Seems to also mediate the transcription of NF1. Does not bind the TATA box. Members of the TBP family are differentially required to regulate transcription and development during early embryogenesis. Particularly regulates genes that have a role in catabolism. This chain is TATA box-binding protein-like 1 (tbpl1), found in Xenopus laevis (African clawed frog).